The sequence spans 290 residues: Diaminopimelate epimerase (290 aa).

3 residues coordinate substrate: Asn17, Gln49, and Asn69. Catalysis depends on Cys78, which acts as the Proton donor. Residues 79 to 80 (GN), Asn166, Asn199, and 217 to 218 (ER) each bind substrate. Cys226 serves as the catalytic Proton acceptor. 227-228 (GS) contributes to the substrate binding site.

Belongs to the diaminopimelate epimerase family. Homodimer.

The protein resides in the cytoplasm. It carries out the reaction (2S,6S)-2,6-diaminopimelate = meso-2,6-diaminopimelate. It participates in amino-acid biosynthesis; L-lysine biosynthesis via DAP pathway; DL-2,6-diaminopimelate from LL-2,6-diaminopimelate: step 1/1. Functionally, catalyzes the stereoinversion of LL-2,6-diaminopimelate (L,L-DAP) to meso-diaminopimelate (meso-DAP), a precursor of L-lysine and an essential component of the bacterial peptidoglycan. In Afipia carboxidovorans (strain ATCC 49405 / DSM 1227 / KCTC 32145 / OM5) (Oligotropha carboxidovorans), this protein is Diaminopimelate epimerase.